A 364-amino-acid polypeptide reads, in one-letter code: DNA replication and repair protein RecF (364 aa).

An ATP-binding site is contributed by 30–37 (GDNGAGKT).

This sequence belongs to the RecF family.

Its subcellular location is the cytoplasm. Its function is as follows. The RecF protein is involved in DNA metabolism; it is required for DNA replication and normal SOS inducibility. RecF binds preferentially to single-stranded, linear DNA. It also seems to bind ATP. This chain is DNA replication and repair protein RecF, found in Stenotrophomonas maltophilia (strain R551-3).